Consider the following 307-residue polypeptide: Oxygen-dependent coproporphyrinogen-III oxidase (307 aa).

Substrate is bound at residue Ser-99. A divalent metal cation is bound by residues His-103 and His-113. His-113 functions as the Proton donor in the catalytic mechanism. 115-117 (NVR) is a substrate binding site. His-152 and His-182 together coordinate a divalent metal cation. An important for dimerization region spans residues 247-282 (YVEFNLVFDRGTLFGLQSGGRTESILMSMPPVVNWR). Residue 265–267 (GGR) participates in substrate binding.

Belongs to the aerobic coproporphyrinogen-III oxidase family. As to quaternary structure, homodimer. A divalent metal cation is required as a cofactor.

The protein localises to the cytoplasm. The catalysed reaction is coproporphyrinogen III + O2 + 2 H(+) = protoporphyrinogen IX + 2 CO2 + 2 H2O. The protein operates within porphyrin-containing compound metabolism; protoporphyrin-IX biosynthesis; protoporphyrinogen-IX from coproporphyrinogen-III (O2 route): step 1/1. Involved in the heme biosynthesis. Catalyzes the aerobic oxidative decarboxylation of propionate groups of rings A and B of coproporphyrinogen-III to yield the vinyl groups in protoporphyrinogen-IX. This chain is Oxygen-dependent coproporphyrinogen-III oxidase, found in Paraburkholderia phytofirmans (strain DSM 17436 / LMG 22146 / PsJN) (Burkholderia phytofirmans).